Here is a 663-residue protein sequence, read N- to C-terminus: UvrABC system protein B (663 aa).

Basic and acidic residues predominate over residues 1–10 (MIDKRDDKPF). Residues 1 to 23 (MIDKRDDKPFKLKSKYKPSGDQP) are disordered. The Helicase ATP-binding domain maps to 31–418 (DNIEGGEKAQ…TNTIIEQIIR (388 aa)). 44-51 (GATGTGKT) is an ATP binding site. The short motif at 97–120 (YYDYYQPEAYVPSSDTYIEKDSSV) is the Beta-hairpin element. Positions 435 to 601 (QMDDLLGEIN…TIKKDIRGLI (167 aa)) constitute a Helicase C-terminal domain. A UVR domain is found at 627-662 (KEAINALQKQMQEAAELLDFELAAQMRDLILELKLM).

Belongs to the UvrB family. As to quaternary structure, forms a heterotetramer with UvrA during the search for lesions. Interacts with UvrC in an incision complex.

It is found in the cytoplasm. The UvrABC repair system catalyzes the recognition and processing of DNA lesions. A damage recognition complex composed of 2 UvrA and 2 UvrB subunits scans DNA for abnormalities. Upon binding of the UvrA(2)B(2) complex to a putative damaged site, the DNA wraps around one UvrB monomer. DNA wrap is dependent on ATP binding by UvrB and probably causes local melting of the DNA helix, facilitating insertion of UvrB beta-hairpin between the DNA strands. Then UvrB probes one DNA strand for the presence of a lesion. If a lesion is found the UvrA subunits dissociate and the UvrB-DNA preincision complex is formed. This complex is subsequently bound by UvrC and the second UvrB is released. If no lesion is found, the DNA wraps around the other UvrB subunit that will check the other stand for damage. The sequence is that of UvrABC system protein B from Streptococcus pyogenes serotype M28 (strain MGAS6180).